The sequence spans 85 residues: Large ribosomal subunit protein bL27 (85 aa).

It belongs to the bacterial ribosomal protein bL27 family.

The protein is Large ribosomal subunit protein bL27 of Mycobacteroides abscessus (strain ATCC 19977 / DSM 44196 / CCUG 20993 / CIP 104536 / JCM 13569 / NCTC 13031 / TMC 1543 / L948) (Mycobacterium abscessus).